The sequence spans 318 residues: 4-hydroxy-3-methylbut-2-enyl diphosphate reductase (318 aa).

C12 is a binding site for [4Fe-4S] cluster. (2E)-4-hydroxy-3-methylbut-2-enyl diphosphate is bound by residues H41 and H74. 2 residues coordinate dimethylallyl diphosphate: H41 and H74. 2 residues coordinate isopentenyl diphosphate: H41 and H74. C96 is a [4Fe-4S] cluster binding site. Residue H124 coordinates (2E)-4-hydroxy-3-methylbut-2-enyl diphosphate. H124 provides a ligand contact to dimethylallyl diphosphate. H124 contributes to the isopentenyl diphosphate binding site. E126 functions as the Proton donor in the catalytic mechanism. T167 is a binding site for (2E)-4-hydroxy-3-methylbut-2-enyl diphosphate. Position 197 (C197) interacts with [4Fe-4S] cluster. The (2E)-4-hydroxy-3-methylbut-2-enyl diphosphate site is built by S225, S226, N227, and S269. 4 residues coordinate dimethylallyl diphosphate: S225, S226, N227, and S269. Isopentenyl diphosphate contacts are provided by S225, S226, N227, and S269.

This sequence belongs to the IspH family. The cofactor is [4Fe-4S] cluster.

The catalysed reaction is isopentenyl diphosphate + 2 oxidized [2Fe-2S]-[ferredoxin] + H2O = (2E)-4-hydroxy-3-methylbut-2-enyl diphosphate + 2 reduced [2Fe-2S]-[ferredoxin] + 2 H(+). The enzyme catalyses dimethylallyl diphosphate + 2 oxidized [2Fe-2S]-[ferredoxin] + H2O = (2E)-4-hydroxy-3-methylbut-2-enyl diphosphate + 2 reduced [2Fe-2S]-[ferredoxin] + 2 H(+). Its pathway is isoprenoid biosynthesis; dimethylallyl diphosphate biosynthesis; dimethylallyl diphosphate from (2E)-4-hydroxy-3-methylbutenyl diphosphate: step 1/1. It participates in isoprenoid biosynthesis; isopentenyl diphosphate biosynthesis via DXP pathway; isopentenyl diphosphate from 1-deoxy-D-xylulose 5-phosphate: step 6/6. Catalyzes the conversion of 1-hydroxy-2-methyl-2-(E)-butenyl 4-diphosphate (HMBPP) into a mixture of isopentenyl diphosphate (IPP) and dimethylallyl diphosphate (DMAPP). Acts in the terminal step of the DOXP/MEP pathway for isoprenoid precursor biosynthesis. The sequence is that of 4-hydroxy-3-methylbut-2-enyl diphosphate reductase from Francisella tularensis subsp. holarctica (strain LVS).